The sequence spans 213 residues: Large ribosomal subunit protein uL1 (213 aa).

It belongs to the universal ribosomal protein uL1 family. Part of the 50S ribosomal subunit.

Its function is as follows. Binds directly to 23S rRNA. Probably involved in E site tRNA release. Functionally, protein L1 is also a translational repressor protein, it controls the translation of its operon by binding to its mRNA. The polypeptide is Large ribosomal subunit protein uL1 (Methanococcus voltae).